We begin with the raw amino-acid sequence, 455 residues long: MNTLIYISALGILSLLAEIFNARKAIVPITIIGLLAIFGFNISEYNHLGSYYNNMMVVDKFSVAFSSLFIIITVFLVALSHEFYKEQKTKISDYVGIKVFLLSGAVAMVSFGNLSMFFLGIEVLSISLYILAASNRLNLKSNEAGMKYFLMGSFASGIILFGICLIYGATGSFDLNKILILINTQAYPQWYYIGIVFLLIGMLFKIATVPFHFWAPDVYEGSPALTTATMSTLAKIVAMATLYKLVTVLLPIQLYSIQIIIVCVAIASMLLGNIMALRQNNVKRMFAFSGISHAGFMVSTLLLTSNAASTLLYYASAYAIAGIAFFAVVMYVTKDKENETINSFNGLGKTHPLLAGILTAALLSMAGIPVLSGFFAKFFLLNQLVYTDWLIVVFVAIISSIISVGYYFKIIIAMYTKESEQTLPNVPVMYQIVAVVALILNIALGLFPNVVLKLL.

Transmembrane regions (helical) follow at residues 25 to 45 (AIVP…ISEY), 61 to 81 (FSVA…ALSH), 99 to 119 (VFLL…MFFL), 149 to 169 (FLMG…IYGA), 193 to 213 (IGIV…PFHF), 257 to 277 (IQII…IMAL), 285 to 305 (MFAF…LLTS), 312 to 332 (LYYA…VMYV), 355 to 375 (AGIL…SGFF), 391 to 411 (IVVF…FKII), and 432 to 452 (IVAV…NVVL).

The protein belongs to the complex I subunit 2 family. NDH-1 is composed of 14 different subunits. Subunits NuoA, H, J, K, L, M, N constitute the membrane sector of the complex.

Its subcellular location is the cell inner membrane. The catalysed reaction is a quinone + NADH + 5 H(+)(in) = a quinol + NAD(+) + 4 H(+)(out). Functionally, NDH-1 shuttles electrons from NADH, via FMN and iron-sulfur (Fe-S) centers, to quinones in the respiratory chain. The immediate electron acceptor for the enzyme in this species is believed to be a menaquinone. Couples the redox reaction to proton translocation (for every two electrons transferred, four hydrogen ions are translocated across the cytoplasmic membrane), and thus conserves the redox energy in a proton gradient. The polypeptide is NADH-quinone oxidoreductase subunit N (Flavobacterium psychrophilum (strain ATCC 49511 / DSM 21280 / CIP 103535 / JIP02/86)).